A 345-amino-acid polypeptide reads, in one-letter code: tRNA-specific 2-thiouridylase MnmA (345 aa).

Residues 6-13 and Leu32 each bind ATP; that span reads LMSGGVDS. Catalysis depends on Cys92, which acts as the Nucleophile. Cys92 and Cys191 are oxidised to a cystine. Residue Gly116 participates in ATP binding. The segment at 138–140 is interaction with tRNA; that stretch reads KDQ. Catalysis depends on Cys191, which acts as the Cysteine persulfide intermediate. Positions 293–294 are interaction with tRNA; it reads RY.

It belongs to the MnmA/TRMU family.

It localises to the cytoplasm. The enzyme catalyses S-sulfanyl-L-cysteinyl-[protein] + uridine(34) in tRNA + AH2 + ATP = 2-thiouridine(34) in tRNA + L-cysteinyl-[protein] + A + AMP + diphosphate + H(+). Functionally, catalyzes the 2-thiolation of uridine at the wobble position (U34) of tRNA, leading to the formation of s(2)U34. The polypeptide is tRNA-specific 2-thiouridylase MnmA (Helicobacter hepaticus (strain ATCC 51449 / 3B1)).